Consider the following 233-residue polypeptide: 2,3,4,5-tetrahydropyridine-2,6-dicarboxylate N-acetyltransferase (233 aa).

The protein belongs to the transferase hexapeptide repeat family. DapH subfamily.

It catalyses the reaction (S)-2,3,4,5-tetrahydrodipicolinate + acetyl-CoA + H2O = L-2-acetamido-6-oxoheptanedioate + CoA. Its pathway is amino-acid biosynthesis; L-lysine biosynthesis via DAP pathway; LL-2,6-diaminopimelate from (S)-tetrahydrodipicolinate (acetylase route): step 1/3. Catalyzes the transfer of an acetyl group from acetyl-CoA to tetrahydrodipicolinate. In Leuconostoc mesenteroides subsp. mesenteroides (strain ATCC 8293 / DSM 20343 / BCRC 11652 / CCM 1803 / JCM 6124 / NCDO 523 / NBRC 100496 / NCIMB 8023 / NCTC 12954 / NRRL B-1118 / 37Y), this protein is 2,3,4,5-tetrahydropyridine-2,6-dicarboxylate N-acetyltransferase.